A 308-amino-acid chain; its full sequence is Ribonuclease Z (308 aa).

The Zn(2+) site is built by His-63, His-65, Asp-67, His-68, His-141, Asp-212, and His-270. Asp-67 serves as the catalytic Proton acceptor.

This sequence belongs to the RNase Z family. As to quaternary structure, homodimer. Zn(2+) is required as a cofactor.

It carries out the reaction Endonucleolytic cleavage of RNA, removing extra 3' nucleotides from tRNA precursor, generating 3' termini of tRNAs. A 3'-hydroxy group is left at the tRNA terminus and a 5'-phosphoryl group is left at the trailer molecule.. Zinc phosphodiesterase, which displays some tRNA 3'-processing endonuclease activity. Probably involved in tRNA maturation, by removing a 3'-trailer from precursor tRNA. The protein is Ribonuclease Z of Pediococcus pentosaceus (strain ATCC 25745 / CCUG 21536 / LMG 10740 / 183-1w).